The sequence spans 56 residues: Large ribosomal subunit protein bL33 (56 aa).

It belongs to the bacterial ribosomal protein bL33 family.

This chain is Large ribosomal subunit protein bL33, found in Acidovorax sp. (strain JS42).